The sequence spans 503 residues: Sugar phosphate exchanger 3 (503 aa).

Residues 20–40 (YTHHHLAAFLLTFFSYSLLHA) form a helical membrane-spanning segment. N-linked (GlcNAc...) asparagine glycans are attached at residues Asn62 and Asn71. 5 helical membrane-spanning segments follow: residues 87 to 107 (TLFLGLLDTIFLFAYAVGLFI), 119 to 139 (LVLTFGMCSSAITMFVFGTLT), 152 to 172 (LVWIVNGLLQSTGWPCVVAIM), 183 to 203 (FVFGLWSACASVGNILGAFLA), and 214 to 234 (AFLVTASVQFAGGIIIFFGLV). N-linked (GlcNAc...) asparagine glycosylation is present at Asn275. Helical transmembrane passes span 300-322 (GVLLYSLAYACLKLVNYSFFFWL), 342-362 (IWYDIGGIVGGTVQGLISDLM), 367-387 (PVLTVSLLLAVGALFGYSHSP), 395-415 (FIMSITGFFIGGPSNMISSAI), 437-457 (GIVDGTGSIGAAMGQFLVPLI), and 466-486 (VFYFFIFMICMTTVFMVPLIV).

This sequence belongs to the major facilitator superfamily. Organophosphate:Pi antiporter (OPA) (TC 2.A.1.4) family.

It localises to the endoplasmic reticulum membrane. The protein resides in the lysosome membrane. Unlike the other SLC37 members, seems to lack glucose-6-phosphate antiporter activity. The polypeptide is Sugar phosphate exchanger 3 (slc37a3) (Xenopus laevis (African clawed frog)).